A 101-amino-acid chain; its full sequence is Putative membrane protein insertion efficiency factor (101 aa).

Belongs to the UPF0161 family.

It localises to the cell membrane. In terms of biological role, could be involved in insertion of integral membrane proteins into the membrane. The polypeptide is Putative membrane protein insertion efficiency factor (Lacticaseibacillus casei (strain BL23) (Lactobacillus casei)).